We begin with the raw amino-acid sequence, 289 residues long: Bidirectional sugar transporter SWEET10 (289 aa).

Residues 1–5 (MAISQ) are Extracellular-facing. The chain crosses the membrane as a helical span at residues 6–26 (AVLATVFGILGNIISFFVCLA). A MtN3/slv 1 domain is found at 11 to 96 (VFGILGNIIS…SLFFFYAPKK (86 aa)). At 27-43 (PIPTFVRIYKRKSSEGY) the chain is on the cytoplasmic side. A helical transmembrane segment spans residues 44-64 (QSIPYVISLFSAMLWMYYAMI). Topologically, residues 65-70 (KKDAMM) are extracellular. A helical membrane pass occupies residues 71–91 (LITINSFAFVVQIVYISLFFF). At 92–103 (YAPKKEKTLTVK) the chain is on the cytoplasmic side. A helical transmembrane segment spans residues 104–124 (FVLFVDVLGFGAIFVLTYFII). The Extracellular portion of the chain corresponds to 125 to 131 (HANKRVQ). The MtN3/slv 2 domain maps to 131-214 (QVLGYICMVF…QMILFLIYKK (84 aa)). A helical transmembrane segment spans residues 132 to 152 (VLGYICMVFALSVFVAPLGII). Topologically, residues 153-165 (RKVIKTKSAEFMP) are cytoplasmic. A helical transmembrane segment spans residues 166–186 (FGLSFFLTLSAVMWFFYGLLL). Over 187–190 (KDMN) the chain is Extracellular. The helical transmembrane segment at 191–211 (IALPNVLGFIFGVLQMILFLI) threads the bilayer. Residues 212–289 (YKKPGTKVLE…EKEVFLISKN (78 aa)) lie on the Cytoplasmic side of the membrane.

Belongs to the SWEET sugar transporter family. In terms of assembly, forms heterooligomers with SWEET8.

The protein localises to the cell membrane. In terms of biological role, mediates both low-affinity uptake and efflux of sugar across the plasma membrane. The sequence is that of Bidirectional sugar transporter SWEET10 from Arabidopsis thaliana (Mouse-ear cress).